The sequence spans 304 residues: DDRGK domain-containing protein 1 (304 aa).

Residues 1–2 (MD) lie on the Lumenal side of the membrane. The helical transmembrane segment at 3–23 (LIILVGIAIALLVVIISLYLL) threads the bilayer. Residues 24–304 (QKKNSTTEAK…LTPVSAEGSS (281 aa)) are Cytoplasmic-facing. The interval 31–174 (EAKPAAAAPQ…AERLAKEERE (144 aa)) is disordered. Residues 53–82 (RRAQIARNQRNRLRQNAPVAAAAPQAEAPA) are compositionally biased toward low complexity. Basic and acidic residues predominate over residues 105-174 (LDEKMGAKKR…AERLAKEERE (70 aa)).

It belongs to the DDRGK1 family. Interacts with Atg9; the interaction is transient.

The protein localises to the endoplasmic reticulum membrane. Substrate adapter for ufmylation, the covalent attachment of the ubiquitin-like modifier UFM1 to substrate proteins. Required for ufmylation of Atg9; protects the nervous system during aging, possibly by stabilizing Atg9 and supporting its function. This chain is DDRGK domain-containing protein 1, found in Drosophila ananassae (Fruit fly).